Consider the following 184-residue polypeptide: MLKKMGEAVARVARKVNETVESGSDTLDLAECKLVSFPIGIYKVLRNVSGQIHLITLANNELKSLTSKFMTTFSQLRELHLEGNFLHRLPSEVSALQHLKAIDLSRNQFQDFPEQLTALPALETINLEENEIVDVPVEKLAAMPALRSINLRFNPLNAEVRVIAPPLIKFDMLMSPEGARAPLP.

LRR repeat units follow at residues 51 to 72, 75 to 96, 98 to 120, 121 to 141, and 145 to 167; these read QIHL…FMTT, QLRE…VSAL, HLKA…TALP, ALET…EKLA, and ALRS…APPL. At S175 the chain carries Phosphoserine.

The sequence is that of Leucine-rich repeat-containing protein 20 (LRRC20) from Homo sapiens (Human).